A 56-amino-acid chain; its full sequence is Preprotein translocase subunit SecG (56 aa).

Over 1-29 (MAKEKATLPPTGAGLMRFFDEDTKAVKIS) the chain is Cytoplasmic. A helical membrane pass occupies residues 30 to 51 (PRGVIALTLILVALEILLHAFG). The Extracellular segment spans residues 52-56 (PQIFG).

This sequence belongs to the SEC61-beta family. In terms of assembly, component of the protein translocase complex. Heterotrimer consisting of alpha (SecY), beta (SecG) and gamma (SecE) subunits. Can form oligomers of the heterotrimer.

Its subcellular location is the cell membrane. In terms of biological role, involved in protein export. The function of the beta subunit is unknown, but it may be involved in stabilization of the trimeric complex. The sequence is that of Preprotein translocase subunit SecG from Thermococcus onnurineus (strain NA1).